The sequence spans 160 residues: Transcriptional regulator MraZ (160 aa).

2 consecutive SpoVT-AbrB domains span residues 5 to 51 and 80 to 123; these read TFEK…GKAL and MAKL…EREA.

Belongs to the MraZ family. As to quaternary structure, forms oligomers.

Its subcellular location is the cytoplasm. The protein resides in the nucleoid. This Phenylobacterium zucineum (strain HLK1) protein is Transcriptional regulator MraZ.